Here is a 242-residue protein sequence, read N- to C-terminus: 1-(5-phosphoribosyl)-5-[(5-phosphoribosylamino)methylideneamino] imidazole-4-carboxamide isomerase (242 aa).

The active-site Proton acceptor is Asp10. Asp132 acts as the Proton donor in catalysis.

This sequence belongs to the HisA/HisF family.

It is found in the cytoplasm. The catalysed reaction is 1-(5-phospho-beta-D-ribosyl)-5-[(5-phospho-beta-D-ribosylamino)methylideneamino]imidazole-4-carboxamide = 5-[(5-phospho-1-deoxy-D-ribulos-1-ylimino)methylamino]-1-(5-phospho-beta-D-ribosyl)imidazole-4-carboxamide. The protein operates within amino-acid biosynthesis; L-histidine biosynthesis; L-histidine from 5-phospho-alpha-D-ribose 1-diphosphate: step 4/9. The protein is 1-(5-phosphoribosyl)-5-[(5-phosphoribosylamino)methylideneamino] imidazole-4-carboxamide isomerase of Methanopyrus kandleri (strain AV19 / DSM 6324 / JCM 9639 / NBRC 100938).